The following is a 188-amino-acid chain: Ribose 1,5-bisphosphate phosphokinase PhnN (188 aa).

Residue 9–16 (GPSGAGKD) coordinates ATP.

Belongs to the ribose 1,5-bisphosphokinase family.

It catalyses the reaction alpha-D-ribose 1,5-bisphosphate + ATP = 5-phospho-alpha-D-ribose 1-diphosphate + ADP. It participates in metabolic intermediate biosynthesis; 5-phospho-alpha-D-ribose 1-diphosphate biosynthesis; 5-phospho-alpha-D-ribose 1-diphosphate from D-ribose 5-phosphate (route II): step 3/3. Its function is as follows. Catalyzes the phosphorylation of ribose 1,5-bisphosphate to 5-phospho-D-ribosyl alpha-1-diphosphate (PRPP). The sequence is that of Ribose 1,5-bisphosphate phosphokinase PhnN from Pectobacterium parmentieri (strain WPP163) (Pectobacterium wasabiae (strain WPP163)).